Consider the following 404-residue polypeptide: Chorismate synthase (404 aa).

2 residues coordinate NADP(+): R40 and R46. Residues 136–138, 257–258, G301, 316–320, and R342 each bind FMN; these read RAS, QA, and KPIST.

Belongs to the chorismate synthase family. As to quaternary structure, homotetramer. FMNH2 is required as a cofactor.

The enzyme catalyses 5-O-(1-carboxyvinyl)-3-phosphoshikimate = chorismate + phosphate. It participates in metabolic intermediate biosynthesis; chorismate biosynthesis; chorismate from D-erythrose 4-phosphate and phosphoenolpyruvate: step 7/7. Functionally, catalyzes the anti-1,4-elimination of the C-3 phosphate and the C-6 proR hydrogen from 5-enolpyruvylshikimate-3-phosphate (EPSP) to yield chorismate, which is the branch point compound that serves as the starting substrate for the three terminal pathways of aromatic amino acid biosynthesis. This reaction introduces a second double bond into the aromatic ring system. The polypeptide is Chorismate synthase (Mycolicibacterium vanbaalenii (strain DSM 7251 / JCM 13017 / BCRC 16820 / KCTC 9966 / NRRL B-24157 / PYR-1) (Mycobacterium vanbaalenii)).